A 648-amino-acid polypeptide reads, in one-letter code: MSHHGGAPKASTWVVASRRSSTVSRAPERRPAEELNRTGPEGYSVGRGGRWRGTSRPPEAVAAGHEELPLCFALKSHFVGAVIGRGGSKIKNIQSTTNTTIQIIQEQPESLVKIFGSKAMQTKAKAVIDNFVKKLEENYNSECGIDTAFQPSVGKDGSTDNNVVAGDRPLIDWDQIREEGLKWQKTKWADLPPIKKNFYKESTATSAMSKVEADSWRKENFNITWDDLKDGEKRPIPNPTCTFDDAFQCYPEVMENIKKAGFQKPTPIQSQAWPIVLQGIDLIGVAQTGTGKTLCYLMPGFIHLVLQPSLKGQRNRPGMLVLTPTRELALQVEGECCKYSYKGLRSVCVYGGGNRDEQIEELKKGVDIIIATPGRLNDLQMSNFVNLKNITYLVLDEADKMLDMGFEPQIMKILLDVRPDRQTVMTSATWPHSVHRLAQSYLKEPMIVYVGTLDLVAVSSVKQNIIVTTEEEKWSHMQTFLQSMSSTDKVIVFVSRKAVADHLSSDLILGNISVESLHGDREQRDREKALENFKTGKVRILIATDLASRGLDVHDVTHVYNFDFPRNIEEYVHRIGRTGRAGRTGVSITTLTRNDWRVASELINILERANQSIPEELVSMAERFKAHQQKREMERKMERPQGRPKKFH.

Positions 1–60 are disordered; it reads MSHHGGAPKASTWVVASRRSSTVSRAPERRPAEELNRTGPEGYSVGRGGRWRGTSRPPEA. The segment covering 10–25 has biased composition (low complexity); sequence ASTWVVASRRSSTVSR. A compositionally biased stretch (basic and acidic residues) spans 26-36; it reads APERRPAEELN. The region spanning 67 to 128 is the KH domain; that stretch reads ELPLCFALKS…AMQTKAKAVI (62 aa). A Q motif motif is present at residues 242 to 270; that stretch reads TFDDAFQCYPEVMENIKKAGFQKPTPIQS. A Helicase ATP-binding domain is found at 273–448; it reads WPIVLQGIDL…QSYLKEPMIV (176 aa). Residue 286–293 participates in ATP binding; that stretch reads AQTGTGKT. The DEAD box signature appears at 396–399; sequence DEAD. A Helicase C-terminal domain is found at 460–621; the sequence is SVKQNIIVTT…SIPEELVSMA (162 aa). Positions 628–641 are enriched in basic and acidic residues; sequence QQKREMERKMERPQ. Positions 628 to 648 are disordered; sequence QQKREMERKMERPQGRPKKFH.

The protein belongs to the DEAD box helicase family. In terms of tissue distribution, expressed in testis. Expressed in many tumors of various histological types at a level that is 100-fold higher than the level observed in normal tissues except testis.

The enzyme catalyses ATP + H2O = ADP + phosphate + H(+). The sequence is that of Probable ATP-dependent RNA helicase DDX43 (DDX43) from Homo sapiens (Human).